The chain runs to 250 residues: Cell division protein ZapD (250 aa).

The protein belongs to the ZapD family. In terms of assembly, interacts with FtsZ.

Its subcellular location is the cytoplasm. In terms of biological role, cell division factor that enhances FtsZ-ring assembly. Directly interacts with FtsZ and promotes bundling of FtsZ protofilaments, with a reduction in FtsZ GTPase activity. This is Cell division protein ZapD from Yersinia pestis bv. Antiqua (strain Antiqua).